We begin with the raw amino-acid sequence, 137 residues long: Large ribosomal subunit protein eL28 (137 aa).

Position 2 is an N-acetylserine (Ser-2). Residues Lys-58 and Lys-65 each participate in a glycyl lysine isopeptide (Lys-Gly) (interchain with G-Cter in SUMO2) cross-link. A Phosphoserine modification is found at Ser-115.

This sequence belongs to the eukaryotic ribosomal protein eL28 family. Component of the large ribosomal subunit.

The protein localises to the cytoplasm. Functionally, component of the large ribosomal subunit. The ribosome is a large ribonucleoprotein complex responsible for the synthesis of proteins in the cell. The protein is Large ribosomal subunit protein eL28 (RPL28) of Bos taurus (Bovine).